The primary structure comprises 280 residues: MPADIMEKNSSSPVAATPASVNTTPDKPKTASEHRKSSKPIMEKRRRARINESLSQLKTLILDALKKDSSRHSKLEKADILEMTVKHLRNLQRAQMTAALSTDPSVLGKYRAGFSECMNEVTRFLSTCEGVNTEVRTRLLGHLANCMTQINAMTYPGQPHPALQAPPPPPPGPGGPQHAPFAPPPPLVPIPGGAAPPPGGAPCKLGSQAGEAAKVFGGFQVVPAPDGQFAFLIPNGAFAHSGPVIPVYTSNSGTSVGPNAVSPSSGPSLTADSMWRPWRN.

The interval 1-44 is disordered; the sequence is MPADIMEKNSSSPVAATPASVNTTPDKPKTASEHRKSSKPIMEK. Residues 10-21 are compositionally biased toward low complexity; sequence SSSPVAATPASV. Basic and acidic residues predominate over residues 26-35; sequence DKPKTASEHR. The 58-residue stretch at 34 to 91 folds into the bHLH domain; it reads HRKSSKPIMEKRRRARINESLSQLKTLILDALKKDSSRHSKLEKADILEMTVKHLRNL. In terms of domain architecture, Orange spans 110 to 143; it reads YRAGFSECMNEVTRFLSTCEGVNTEVRTRLLGHL. 2 disordered regions span residues 157-200 and 254-280; these read GQPH…PPGG and TSVGPNAVSPSSGPSLTADSMWRPWRN. 2 stretches are compositionally biased toward pro residues: residues 164-174 and 181-200; these read QAPPPPPPGPG and FAPPPPLVPIPGGAAPPPGG. Polar residues predominate over residues 254 to 271; the sequence is TSVGPNAVSPSSGPSLTA. Residues 275 to 278 carry the WRPW motif motif; sequence WRPW.

As to quaternary structure, transcription repression requires formation of a complex with a corepressor protein of the Groucho/TLE family. Interacts (via WPRW motif) with TLE1, and more weakly with TLE2. Interacts with HES6. Interacts with SIRT1. Interacts with an FA complex, composed of FANCA, FANCF, FANCG and FANCL, but not of FANCC, nor FANCE. Post-translationally, (Microbial infection) Ubiquitinated via human cytomegalovirus/HCMV protein IE1 that assembles a HES1 ubiquitination complex; leading to HES1 proteasomal degradation.

Its subcellular location is the nucleus. In terms of biological role, transcriptional repressor of genes that require a bHLH protein for their transcription. May act as a negative regulator of myogenesis by inhibiting the functions of MYOD1 and ASH1. Binds DNA on N-box motifs: 5'-CACNAG-3' with high affinity and on E-box motifs: 5'-CANNTG-3' with low affinity. May play a role in a functional FA core complex response to DNA cross-link damage, being required for the stability and nuclear localization of FA core complex proteins, as well as for FANCD2 monoubiquitination in response to DNA damage. The polypeptide is Transcription factor HES-1 (HES1) (Homo sapiens (Human)).